Reading from the N-terminus, the 104-residue chain is MEKRYSQMTPHELNTEIALLSEKARKAEQHGIINELAVLERKITMAKAYLLNPEDYSPGETYRVENTEDEFTISYLNGVFAWGYRTSSPQQEEALPISVLQEKE.

As to quaternary structure, homodimer.

This is an uncharacterized protein from Bacillus subtilis (strain 168).